We begin with the raw amino-acid sequence, 560 residues long: Glucose-6-phosphate isomerase, cytosolic (560 aa).

N-acetylalanine is present on alanine 2. The active-site Proton donor is the glutamate 361. Active-site residues include histidine 392 and lysine 517.

It belongs to the GPI family. In terms of assembly, homodimer.

Its subcellular location is the cytoplasm. The enzyme catalyses alpha-D-glucose 6-phosphate = beta-D-fructose 6-phosphate. Its pathway is carbohydrate degradation; glycolysis; D-glyceraldehyde 3-phosphate and glycerone phosphate from D-glucose: step 2/4. The sequence is that of Glucose-6-phosphate isomerase, cytosolic (PGIC) from Arabidopsis lyrata subsp. petraea (Northern rock-cress).